Reading from the N-terminus, the 1165-residue chain is Activity-dependent neuroprotector homeobox protein 2 (1165 aa).

The C2H2-type 1 zinc-finger motif lies at Y73–H96. The C2H2-type 2; degenerate zinc finger occupies I106–H128. A Glycyl lysine isopeptide (Lys-Gly) (interchain with G-Cter in SUMO2) cross-link involves residue K146. The C2H2-type 3; degenerate zinc-finger motif lies at F155–H178. The C2H2-type 4 zinc-finger motif lies at Y215–H240. Low complexity predominate over residues S303–S318. The segment at S303–A327 is disordered. The segment at K696–H718 adopts a C2H2-type 5; degenerate zinc-finger fold. The C2H2-type 6; degenerate zinc finger occupies Q724–H746. The segment at V777–H798 adopts a C2H2-type 7; degenerate zinc-finger fold. C2H2-type zinc fingers lie at residues L800–H823 and L905–H935. Residues P1005–A1068 form a disordered region. Residues K1009 and K1048 each participate in a glycyl lysine isopeptide (Lys-Gly) (interchain with G-Cter in SUMO2) cross-link. Residues K1009 to E1024 show a composition bias toward basic and acidic residues. A DNA-binding region (homeobox) is located at residues D1090–I1132.

The protein belongs to the krueppel C2H2-type zinc-finger protein family. In terms of assembly, may interact with SMARCA4/BRG1. As to expression, expressed widely, with the highest level in the brain.

The protein localises to the nucleus. Its function is as follows. May be involved in transcriptional regulation. May play a role in neuronal function; perhaps involved in protection of brain tissues from oxidative stress. May be involved in erythroid differentiation. The polypeptide is Activity-dependent neuroprotector homeobox protein 2 (Adnp2) (Mus musculus (Mouse)).